Consider the following 300-residue polypeptide: MASKPGDFDAVRKDIVSLLDQPEYDDGSAGPVLVRLAWHSAGTYDKSTDTGGSNGAGMRYEAEGGDPANAGLQNARQFLEPVKARHPWITYADLRTLAGVVAVRAMGGPEIPWRAGRTDFADDSRVPPRGRLPDATQGAAHVRDIFYRMGFDDREIVALSGAHSLGRCHPANSGFEGKWVNNPTRFSNQYFRLLLSEDWREKTVAGTGLKQFVAVDEVTGDELMMLPTDLSLTSDPVFARWVKVYRDDQDLFFADFAKVFDKLMELGIKRDAEGKVINKENVEGGYVSAPKKQGKIASKL.

Catalysis depends on H39, which acts as the Proton acceptor. Disordered stretches follow at residues 44–64 (YDKSTDTGGSNGAGMRYEAEG) and 116–135 (GRTDFADDSRVPPRGRLPDA). Residues 116–126 (GRTDFADDSRV) show a composition bias toward basic and acidic residues. H163 serves as a coordination point for heme b. W179 functions as the Tryptophan radical intermediate in the catalytic mechanism.

This sequence belongs to the peroxidase family. Cytochrome c peroxidase subfamily. It depends on heme b as a cofactor.

Its function is as follows. Destroys radicals which are normally produced within the cells and which are toxic to biological systems. This is Putative heme-binding peroxidase from Pyricularia oryzae (strain 70-15 / ATCC MYA-4617 / FGSC 8958) (Rice blast fungus).